Reading from the N-terminus, the 146-residue chain is Hemoglobin subunit beta (146 aa).

V1 is subject to N-acetylvaline. Residues 2–146 enclose the Globin domain; it reads HLTDAEKAAI…VATALGHKYH (145 aa). K59 is subject to N6-acetyllysine. H63 lines the heme b pocket. K82 is modified (N6-acetyllysine). H92 lines the heme b pocket. C93 carries the post-translational modification S-nitrosocysteine. K144 bears the N6-acetyllysine mark.

Belongs to the globin family. Heterotetramer of two alpha chains and two beta chains. As to expression, red blood cells.

In terms of biological role, involved in oxygen transport from the lung to the various peripheral tissues. This chain is Hemoglobin subunit beta (HBB), found in Ondatra zibethicus (Muskrat).